Consider the following 262-residue polypeptide: Spindlin-1 (262 aa).

Residues 1–51 (MKTPFGKTPGQRSRADAGHAGVSANMMKKRTSHKKHRSSVGPSKPVSQPRR) are disordered. Residues K7 and K28 each participate in a glycyl lysine isopeptide (Lys-Gly) (interchain with G-Cter in SUMO2) cross-link. The span at 27-38 (MKKRTSHKKHRS) shows a compositional bias: basic residues. The residue at position 44 (K44) is an N6-acetyllysine; alternate. Residue K44 forms a Glycyl lysine isopeptide (Lys-Gly) (interchain with G-Cter in SUMO2); alternate linkage. Residues 53-116 (IVGCRIQHGW…RVSALEVLPD (64 aa)) form a tudor-like domain 1 region. The interval 93-98 (GFDCVY) is histone H3K4me3 and H3R8me2a binding. 2 positions are modified to phosphoserine; by AURKA: S109 and S124. A tudor-like domain 2 region spans residues 132–193 (MIGKAVEHMF…DYKEGDLRIM (62 aa)). E142 is a region of interest (histone H3K4me3 and H3R8me2a binding). S199 carries the phosphoserine modification. Positions 213 to 262 (LVGKQVEYAKEDGSKRTGMVIHQVEAKPSVYFIKFDDDFHIYVYDLVKTS) are tudor-like domain 3. Residues 250-252 (DFH) form a histone H3K4me3 and H3R8me2a binding region.

Belongs to the SPIN/STSY family. In terms of assembly, homodimer; may form higher-order oligomers. Interacts with TCF7L2/TCF4; the interaction is direct. Interacts with HABP4 and SERBP1. Interacts with SPINDOC; SPINDOC stabilizes SPIN1 and enhances its association with bivalent H3K4me3K9me3 mark. Interacts with SPOCD1; promoting recruitment of PIWIL4 and SPOCD1 to transposons. Phosphorylated during oocyte meiotic maturation. Highly expressed in ovarian cancer tissues.

The protein localises to the nucleus. It is found in the nucleolus. Its function is as follows. Chromatin reader that specifically recognizes and binds histone H3 both trimethylated at 'Lys-4' and 'Lys-9' (H3K4me3K9me3) and is involved in piRNA-mediated retrotransposon silencing during spermatogenesis. Plays a key role in the initiation of the PIWIL4-piRNA pathway, a pathway that directs transposon DNA methylation and silencing in the male embryonic germ cells, by promoting recruitment of DNA methylation machinery to transposons: binds young, but not old, LINE1 transposons, which are specifically marked with H3K4me3K9me3, and promotes the recruitment of PIWIL4 and SPOCD1 to transposons, leading to piRNA-directed DNA methylation. Also recognizes and binds histone H3 both trimethylated at 'Lys-4' and asymmetrically dimethylated at 'Arg-8' (H3K4me3 and H3R8me2a) and acts as an activator of Wnt signaling pathway downstream of PRMT2. In case of cancer, promotes cell cancer proliferation via activation of the Wnt signaling pathway. Overexpression induces metaphase arrest and chromosomal instability. Localizes to active rDNA loci and promotes the expression of rRNA genes. May play a role in cell-cycle regulation during the transition from gamete to embryo. Involved in oocyte meiotic resumption, a process that takes place before ovulation to resume meiosis of oocytes blocked in prophase I: may act by regulating maternal transcripts to control meiotic resumption. In Homo sapiens (Human), this protein is Spindlin-1.